Consider the following 500-residue polypeptide: Cytochrome P450 2D14 (500 aa).

Residue cysteine 446 participates in heme binding.

It belongs to the cytochrome P450 family. It depends on heme as a cofactor.

Its subcellular location is the endoplasmic reticulum membrane. It localises to the microsome membrane. The enzyme catalyses an organic molecule + reduced [NADPH--hemoprotein reductase] + O2 = an alcohol + oxidized [NADPH--hemoprotein reductase] + H2O + H(+). Functionally, cytochromes P450 are a group of heme-thiolate monooxygenases. In liver microsomes, this enzyme is involved in an NADPH-dependent electron transport pathway. It oxidizes a variety of structurally unrelated compounds, including steroids, fatty acids, and xenobiotics. This is Cytochrome P450 2D14 (CYP2D14) from Bos taurus (Bovine).